Consider the following 878-residue polypeptide: Alanine--tRNA ligase (878 aa).

Zn(2+) is bound by residues histidine 566, histidine 570, cysteine 668, and histidine 672. Residues 846–866 (GGGRPDMAQAGGKQPEKLEEA) form a disordered region.

Belongs to the class-II aminoacyl-tRNA synthetase family. The cofactor is Zn(2+).

It localises to the cytoplasm. It carries out the reaction tRNA(Ala) + L-alanine + ATP = L-alanyl-tRNA(Ala) + AMP + diphosphate. Functionally, catalyzes the attachment of alanine to tRNA(Ala) in a two-step reaction: alanine is first activated by ATP to form Ala-AMP and then transferred to the acceptor end of tRNA(Ala). Also edits incorrectly charged Ser-tRNA(Ala) and Gly-tRNA(Ala) via its editing domain. The polypeptide is Alanine--tRNA ligase (Bacillus pumilus (strain SAFR-032)).